A 208-amino-acid polypeptide reads, in one-letter code: V-type ATP synthase subunit D (208 aa).

This sequence belongs to the V-ATPase D subunit family.

Its function is as follows. Produces ATP from ADP in the presence of a proton gradient across the membrane. The sequence is that of V-type ATP synthase subunit D from Streptococcus pyogenes serotype M1.